Reading from the N-terminus, the 269-residue chain is Shikimate dehydrogenase (NADP(+)) (269 aa).

Residues 22–24 (TLS) and T68 contribute to the shikimate site. The active-site Proton acceptor is K72. Residues N93 and D104 each contribute to the shikimate site. NADP(+) is bound by residues 128-132 (GAGGA), 152-157 (NRTNLR), and F210. Y212 contacts shikimate. Residue G233 participates in NADP(+) binding.

This sequence belongs to the shikimate dehydrogenase family. Homodimer.

The catalysed reaction is shikimate + NADP(+) = 3-dehydroshikimate + NADPH + H(+). The protein operates within metabolic intermediate biosynthesis; chorismate biosynthesis; chorismate from D-erythrose 4-phosphate and phosphoenolpyruvate: step 4/7. Involved in the biosynthesis of the chorismate, which leads to the biosynthesis of aromatic amino acids. Catalyzes the reversible NADPH linked reduction of 3-dehydroshikimate (DHSA) to yield shikimate (SA). This Saccharolobus islandicus (strain L.S.2.15 / Lassen #1) (Sulfolobus islandicus) protein is Shikimate dehydrogenase (NADP(+)).